The following is a 468-amino-acid chain: Abscisic acid 8'-hydroxylase 4 (468 aa).

Residues 4-24 (IWFLVVPILILCLLLVRVIVS) form a helical membrane-spanning segment. Cys415 contributes to the heme binding site.

Belongs to the cytochrome P450 family. Requires heme as cofactor. Mainly expressed in flowers. Lower expression in siliques, rosette leaves, roots and stems. Not expressed in dry seeds. Expressed in silique envelopes, but not in embryo or endosperm during the seed development.

The protein localises to the membrane. It carries out the reaction 2-cis-(+)-abscisate + reduced [NADPH--hemoprotein reductase] + O2 = (+)-8'-hydroxyabscisate + oxidized [NADPH--hemoprotein reductase] + H2O + H(+). The protein operates within plant hormone degradation; abscisic acid degradation. Its function is as follows. Involved in the oxidative degradation of abscisic acid, but not in the isomerization of the produced 8'-hydroxyabscisic acid (8'-OH-ABA) to (-)-phaseic acid (PA). The sequence is that of Abscisic acid 8'-hydroxylase 4 (CYP707A4) from Arabidopsis thaliana (Mouse-ear cress).